Here is a 65-residue protein sequence, read N- to C-terminus: Large ribosomal subunit protein uL30 (65 aa).

The protein belongs to the universal ribosomal protein uL30 family. As to quaternary structure, part of the 50S ribosomal subunit.

This chain is Large ribosomal subunit protein uL30, found in Desulfosudis oleivorans (strain DSM 6200 / JCM 39069 / Hxd3) (Desulfococcus oleovorans).